A 454-amino-acid chain; its full sequence is Prenyltransferase nscD (454 aa).

This sequence belongs to the tryptophan dimethylallyltransferase family.

The protein operates within secondary metabolite biosynthesis. In terms of biological role, prenyltransferase; part of the gene cluster that mediates the biosynthesis of neosartoricin, a prenylated anthracenone that exhibits T-cell antiproliferative activity, suggestive of a physiological role as an immunosuppressive agent. The non-reducing polyketide synthase nscA probably synthesizes and cyclizes the decaketide backbone. The hydrolase nscB then mediates the product release through hydrolysis followed by spontaneous decarboxylation. The prenyltransferase nscD catalyzes the addition of the dimethylallyl group to the aromatic C5. The FAD-dependent monooxygenase nscC is then responsible for the stereospecific hydroxylation at C2. There is no gene encoding O-acetyltransferase in the nsc gene cluster; thus, the last step of 2-O-acetylation leading to neosartoricin may be catalyzed by an unidentified O-acetyltransferase. In Neosartorya fischeri (strain ATCC 1020 / DSM 3700 / CBS 544.65 / FGSC A1164 / JCM 1740 / NRRL 181 / WB 181) (Aspergillus fischerianus), this protein is Prenyltransferase nscD.